The sequence spans 512 residues: Kelch repeat protein C2 (512 aa).

Positions 2–67 constitute a BTB domain; that stretch reads ESVIFSINGE…MRWKKINITV (66 aa). Residues 102–176 form the BACK domain; the sequence is CIRMFNFSKR…LLKWIHKNPN (75 aa). 6 Kelch repeats span residues 216-261, 262-307, 309-354, 356-403, 405-449, and 452-498; these read IKHN…LYNC, LYII…VNDG, LYVI…FVND, IYVM…EYDG, IYAI…SCGD, and LIIA…THKS.

The protein belongs to the poxviruses Kelch family.

The chain is Kelch repeat protein C2 from Camelus.